The primary structure comprises 823 residues: Translation initiation factor IF-2 (823 aa).

2 disordered regions span residues 30–66 (VPPSLARGTSTGKSFTTVEVRSKKRRPGEYISHDDKR) and 156–192 (TPSHSNKSGHDDRGGKKYAHGATGRHKEKEGVSIKKV). Residues 36–48 (RGTSTGKSFTTVE) show a composition bias toward polar residues. Positions 56–66 (PGEYISHDDKR) are enriched in basic and acidic residues. One can recognise a tr-type G domain in the interval 322–491 (PRPPVVTVMG…LLLAEMLELS (170 aa)). Positions 331–338 (GHVDHGKT) are G1. 331–338 (GHVDHGKT) contributes to the GTP binding site. Residues 356–360 (GITQH) are G2. Residues 377 to 380 (DTPG) are G3. GTP is bound by residues 377–381 (DTPGH) and 431–434 (NKID). The segment at 431–434 (NKID) is G4. The segment at 467–469 (SAK) is G5.

Belongs to the TRAFAC class translation factor GTPase superfamily. Classic translation factor GTPase family. IF-2 subfamily.

Its subcellular location is the cytoplasm. One of the essential components for the initiation of protein synthesis. Protects formylmethionyl-tRNA from spontaneous hydrolysis and promotes its binding to the 30S ribosomal subunits. Also involved in the hydrolysis of GTP during the formation of the 70S ribosomal complex. This Anaplasma phagocytophilum (strain HZ) protein is Translation initiation factor IF-2.